Reading from the N-terminus, the 144-residue chain is Large ribosomal subunit protein uL15 (144 aa).

Residues 1–14 show a composition bias toward basic residues; sequence MVVRREKKSRKMRG. Residues 1–35 are disordered; sequence MVVRREKKSRKMRGSRTMGWGIRGQHRDRGSQGGR.

It belongs to the universal ribosomal protein uL15 family. In terms of assembly, part of the 50S ribosomal subunit.

Its function is as follows. Binds to the 23S rRNA. The polypeptide is Large ribosomal subunit protein uL15 (Saccharolobus solfataricus (strain ATCC 35092 / DSM 1617 / JCM 11322 / P2) (Sulfolobus solfataricus)).